Consider the following 380-residue polypeptide: Cytochrome b (380 aa).

A run of 4 helical transmembrane segments spans residues 33–53 (FGSL…FLAM), 77–98 (WLIR…FLHV), 113–133 (WNMG…GYVL), and 178–198 (FFAF…VHLL). 2 residues coordinate heme b: His83 and His97. Heme b contacts are provided by His182 and His196. Residue His201 participates in a ubiquinone binding. 4 helical membrane passes run 226-246 (IKDF…VLFF), 288-308 (LGGV…PLLH), 320-340 (ITQT…WIGG), and 347-367 (FIMI…IFMP).

Belongs to the cytochrome b family. As to quaternary structure, the cytochrome bc1 complex contains 11 subunits: 3 respiratory subunits (MT-CYB, CYC1 and UQCRFS1), 2 core proteins (UQCRC1 and UQCRC2) and 6 low-molecular weight proteins (UQCRH/QCR6, UQCRB/QCR7, UQCRQ/QCR8, UQCR10/QCR9, UQCR11/QCR10 and a cleavage product of UQCRFS1). This cytochrome bc1 complex then forms a dimer. Heme b is required as a cofactor.

Its subcellular location is the mitochondrion inner membrane. Its function is as follows. Component of the ubiquinol-cytochrome c reductase complex (complex III or cytochrome b-c1 complex) that is part of the mitochondrial respiratory chain. The b-c1 complex mediates electron transfer from ubiquinol to cytochrome c. Contributes to the generation of a proton gradient across the mitochondrial membrane that is then used for ATP synthesis. This Chionomys roberti (Robert's snow vole) protein is Cytochrome b (MT-CYB).